The following is a 93-amino-acid chain: Putative hemolysin E-like protein (93 aa).

The protein belongs to the hemolysin E family.

The sequence is that of Putative hemolysin E-like protein from Escherichia coli O6:H1 (strain CFT073 / ATCC 700928 / UPEC).